A 110-amino-acid chain; its full sequence is Large ribosomal subunit protein uL22 (110 aa).

This sequence belongs to the universal ribosomal protein uL22 family. As to quaternary structure, part of the 50S ribosomal subunit.

Its function is as follows. This protein binds specifically to 23S rRNA; its binding is stimulated by other ribosomal proteins, e.g. L4, L17, and L20. It is important during the early stages of 50S assembly. It makes multiple contacts with different domains of the 23S rRNA in the assembled 50S subunit and ribosome. In terms of biological role, the globular domain of the protein is located near the polypeptide exit tunnel on the outside of the subunit, while an extended beta-hairpin is found that lines the wall of the exit tunnel in the center of the 70S ribosome. The chain is Large ribosomal subunit protein uL22 from Leptospira interrogans serogroup Icterohaemorrhagiae serovar copenhageni (strain Fiocruz L1-130).